Reading from the N-terminus, the 89-residue chain is uncharacterized protein (89 aa).

The helical transmembrane segment at 67 to 86 (VYLSSMYICFILLAIWMTVW) threads the bilayer.

Its subcellular location is the membrane. This is an uncharacterized protein from Bacillus subtilis (strain 168).